Reading from the N-terminus, the 269-residue chain is Homocitrate synthase subunit alpha (269 aa).

The 253-residue stretch at 3 to 255 folds into the Pyruvate carboxyltransferase domain; sequence INIVDTTLRD…IYTGDFEDII (253 aa).

It belongs to the alpha-IPM synthase/homocitrate synthase family. As to quaternary structure, heterodimer of an alpha and an omega chain.

It catalyses the reaction acetyl-CoA + 2-oxoglutarate + H2O = (2R)-homocitrate + CoA + H(+). In terms of biological role, this protein is a Fe-Mo-cofactor biosynthetic component. This is Homocitrate synthase subunit alpha (nifV-ALPHA) from Clostridium pasteurianum.